A 460-amino-acid polypeptide reads, in one-letter code: MEFSEWYSDILEKAGIYDLRYPIKGCGVYLPYGFKIRRYSFEILRKLLDETGHDETLFPMLIPENLLAKEGEHIKGFEDEVFWVTHGGKTPLEVKLALRPTSETTMYYMMKQWIKVHTDLPLKLYQVVNTFRYETKHTRPLIRLREIMSFKEAHTAHATKKECDAQIEEALTLYKAFFDEIGVPYVISKRPEWDKFPGADYTMAFDTIYPDGKTMQIGTVHNLGQNFAKTFELEFETPDGEKDFVYQTCYGISDRAIASLISVHGDEKGLVIPVDVAPIQIVLIPLLFKGKEEIVMDKIKELNNTLKSEFRVHLDDRDIRPGRKYNDWELKGVPLRIELGPRDIENGHALIVRRDTGEKITVEYSNILEEVEKIVSMYKENLKLKAEEKVKSFITVLDFENDVNSLSEKVKAKLLENKGIILIPFNESIYNEEFEELIDASVLGLTTYEGKEYISVARTY.

Belongs to the class-II aminoacyl-tRNA synthetase family. ProS type 3 subfamily. Homodimer.

It is found in the cytoplasm. The catalysed reaction is tRNA(Pro) + L-proline + ATP = L-prolyl-tRNA(Pro) + AMP + diphosphate. In terms of biological role, catalyzes the attachment of proline to tRNA(Pro) in a two-step reaction: proline is first activated by ATP to form Pro-AMP and then transferred to the acceptor end of tRNA(Pro). The protein is Proline--tRNA ligase of Methanococcus maripaludis (strain DSM 14266 / JCM 13030 / NBRC 101832 / S2 / LL).